The following is a 741-amino-acid chain: Chromosome transmission fidelity protein 18 (741 aa).

183-190 (GPPGIGKT) contributes to the ATP binding site.

It belongs to the activator 1 small subunits family. CTF18 subfamily. In terms of assembly, component of the CTF18-RFC complex, which consists of CTF18, CTF8, DCC1, RFC2, RFC3, RFC4 and RFC5. CTF18 interacts with ECO1.

It is found in the nucleus. Its function is as follows. Essential for the fidelity of chromosome transmission. Required for the DNA replication block checkpoint. Component of the RFC-like complex CTF18-RFC which is required for efficient establishment of chromosome cohesion during S-phase and may load or unload POL30/PCNA. During a clamp loading circle, the RFC:clamp complex binds to DNA and the recognition of the double-stranded/single-stranded junction stimulates ATP hydrolysis by RFC. The complex presumably provides bipartite ATP sites in which one subunit supplies a catalytic site for hydrolysis of ATP bound to the neighboring subunit. Dissociation of RFC from the clamp leaves the clamp encircling DNA. The sequence is that of Chromosome transmission fidelity protein 18 (CTF18) from Saccharomyces cerevisiae (strain ATCC 204508 / S288c) (Baker's yeast).